We begin with the raw amino-acid sequence, 144 residues long: Actin-associated protein FAM107A (144 aa).

Residues 66–112 (ELQRVLEHRRRNQLIKKKKEELEAKRLQCPFEQELLRRQQRLNQLEK) adopt a coiled-coil conformation. The short motif at 74–84 (RRRNQLIKKKK) is the Nuclear localization signal element. The segment at 105–124 (QRLNQLEKPPEKEEDHAPEF) is disordered. Positions 112-124 (KPPEKEEDHAPEF) are enriched in basic and acidic residues.

The protein belongs to the FAM107 family. In terms of assembly, interacts with ACTB. Interacts with COMMD1; this interaction stabilizes COMMD1 in the nucleus. Interacts with MAP1A. Interacts with PRDX1. Interacts with F-actin. In terms of tissue distribution, widely expressed. Expressed in neurons. Expressed in malignant glial tumors. Expression is reduced or absent in a number of cancer cell lines.

It localises to the nucleus. The protein resides in the cytoplasm. The protein localises to the cytoskeleton. Its subcellular location is the stress fiber. It is found in the cell junction. It localises to the focal adhesion. The protein resides in the cell projection. The protein localises to the ruffle membrane. Its subcellular location is the synapse. Functionally, stress-inducible actin-binding protein that plays a role in synaptic and cognitive functions by modulating actin filamentous (F-actin) dynamics. Mediates polymerization of globular actin to F-actin. Also binds to, stabilizes and bundles F-actin. Involved in synaptic function by regulating neurite outgrowth in an actin-dependent manner and for the acquisition of hippocampus-dependent cognitive function, such as learning and long-term memory. Plays a role in the actin and microtubule cytoskeleton organization; negatively regulates focal adhesion (FA) assembly promoting malignant glial cell migration in an actin-, microtubule- and MAP1A-dependent manner. Also involved in neuroblastoma G1/S phase cell cycle progression and cell proliferation inhibition by stimulating ubiquitination of NF-kappa-B subunit RELA and NF-kappa-B degradation in a COMMD1- and actin-dependent manner. May play a role in tumor development. The sequence is that of Actin-associated protein FAM107A from Homo sapiens (Human).